The sequence spans 178 residues: Large ribosomal subunit protein bL25 (178 aa).

It belongs to the bacterial ribosomal protein bL25 family. CTC subfamily. Part of the 50S ribosomal subunit; part of the 5S rRNA/L5/L18/L25 subcomplex. Contacts the 5S rRNA. Binds to the 5S rRNA independently of L5 and L18.

In terms of biological role, this is one of the proteins that binds to the 5S RNA in the ribosome where it forms part of the central protuberance. This is Large ribosomal subunit protein bL25 from Campylobacter jejuni subsp. jejuni serotype O:6 (strain 81116 / NCTC 11828).